The sequence spans 233 residues: Large ribosomal subunit protein uL22m (233 aa).

The protein belongs to the universal ribosomal protein uL22 family. As to quaternary structure, component of the mitochondrial ribosome large subunit (39S) which comprises a 16S rRNA and about 50 distinct proteins.

The protein resides in the mitochondrion. The polypeptide is Large ribosomal subunit protein uL22m (mRpL22) (Drosophila melanogaster (Fruit fly)).